Reading from the N-terminus, the 86-residue chain is RNA-binding protein Hfq (86 aa).

The Sm domain maps to 10-71; that stretch reads DLFLNNARKE…VSTIQPGKYI (62 aa).

This sequence belongs to the Hfq family. Homohexamer.

Functionally, RNA chaperone that binds small regulatory RNA (sRNAs) and mRNAs to facilitate mRNA translational regulation in response to envelope stress, environmental stress and changes in metabolite concentrations. Also binds with high specificity to tRNAs. This is RNA-binding protein Hfq from Clostridioides difficile (strain 630) (Peptoclostridium difficile).